We begin with the raw amino-acid sequence, 29 residues long: GLWKSLLKNVGKAAGKAALNAVTDMVNQS.

As to expression, expressed by the skin glands.

It is found in the secreted. Its function is as follows. Has antimicrobial activity. The chain is Dermaseptin-J9 from Phasmahyla jandaia (Jandaia leaf frog).